A 101-amino-acid chain; its full sequence is uncharacterized protein (101 aa).

This is an uncharacterized protein from Escherichia coli O157:H7.